The primary structure comprises 287 residues: MNAKILFKIANSFLLYDLSTKSQFNAVIRKKLKQEDRIITVGDNVEFVKDQYEYVIEKIDERKNLLIRPKVANIDTLIIVNSVKEPDFSSYGLNKFLAFYEARNINNVIIYFSKMDLLNKQESKNMNQIISQYEQNGYIVLNSLDKEKNKEKILNMIKNNVVCFAGQSGVGKSTLINFLIPDLELRTQEISQALNRGKHTTTSSLMIPFNEGFVIDTPGFGSLDLNMTQLELANSFTDFRNNSVHCKFKNCLHTNEQNCFIKKMVDENKIYKQRYLDYLKMFSEIKK.

The CP-type G domain occupies 63 to 223 (KNLLIRPKVA…VIDTPGFGSL (161 aa)). GTP contacts are provided by residues 113–116 (SKMD) and 166–174 (GQSGVGKST). Residues Cys246, Cys251, His253, and Cys259 each contribute to the Zn(2+) site.

The protein belongs to the TRAFAC class YlqF/YawG GTPase family. RsgA subfamily. Monomer. Associates with 30S ribosomal subunit, binds 16S rRNA. The cofactor is Zn(2+).

It is found in the cytoplasm. In terms of biological role, one of several proteins that assist in the late maturation steps of the functional core of the 30S ribosomal subunit. Helps release RbfA from mature subunits. May play a role in the assembly of ribosomal proteins into the subunit. Circularly permuted GTPase that catalyzes slow GTP hydrolysis, GTPase activity is stimulated by the 30S ribosomal subunit. The protein is Small ribosomal subunit biogenesis GTPase RsgA of Malacoplasma penetrans (strain HF-2) (Mycoplasma penetrans).